Consider the following 197-residue polypeptide: HTH-type transcriptional regulator BetI (197 aa).

The region spanning 8–68 (PIRRQQLIEA…ATMRYLMSVL (61 aa)) is the HTH tetR-type domain. Residues 31-50 (SIALIARLAGVSNGIISHYF) constitute a DNA-binding region (H-T-H motif).

The protein operates within amine and polyamine biosynthesis; betaine biosynthesis via choline pathway [regulation]. In terms of biological role, repressor involved in the biosynthesis of the osmoprotectant glycine betaine. It represses transcription of the choline transporter BetT and the genes of BetAB involved in the synthesis of glycine betaine. This Pseudomonas fluorescens (strain Pf0-1) protein is HTH-type transcriptional regulator BetI.